Consider the following 90-residue polypeptide: Co-chaperonin GroES (90 aa).

This sequence belongs to the GroES chaperonin family. As to quaternary structure, heptamer of 7 subunits arranged in a ring. Interacts with the chaperonin GroEL.

Its subcellular location is the cytoplasm. Together with the chaperonin GroEL, plays an essential role in assisting protein folding. The GroEL-GroES system forms a nano-cage that allows encapsulation of the non-native substrate proteins and provides a physical environment optimized to promote and accelerate protein folding. GroES binds to the apical surface of the GroEL ring, thereby capping the opening of the GroEL channel. This Borreliella afzelii (strain PKo) (Borrelia afzelii) protein is Co-chaperonin GroES.